A 40-amino-acid chain; its full sequence is Cytolysin SmT-1 (40 aa).

The segment at 3–12 (ALAGTIIAGA) is plays an important role in the hemolytic activity. Positions 11–30 (GASLGFQILDKVLGELGKVS) are N-terminal region.

The protein belongs to the actinoporin family. Sea anemone subfamily. As to quaternary structure, octamer or nonamer in membranes. Monomer in the soluble state.

The protein localises to the secreted. The protein resides in the nematocyst. Its subcellular location is the target cell membrane. Its function is as follows. Pore-forming protein that forms cations-selective hydrophilic pores of around 1 nm and causes cardiac stimulation and cytolysis. Pore formation is a multi-step process that involves specific recognition of membrane sphingomyelin (but neither cholesterol nor phosphatidylcholine) using aromatic rich region and adjacent phosphocholine (POC) binding site, firm binding to the membrane (mainly driven by hydrophobic interactions) accompanied by the transfer of the N-terminal region to the lipid-water interface and finally pore formation after oligomerization of monomers. This toxin shows hemolytic activities. The sequence is that of Cytolysin SmT-1 from Stichodactyla mertensii (Merten's carpet sea anemone).